The chain runs to 226 residues: Biosynthetic peptidoglycan transglycosylase (226 aa).

A helical membrane pass occupies residues 10 to 30 (IIMTLLALLILPYLLIPVYAL).

This sequence belongs to the glycosyltransferase 51 family.

The protein localises to the cell inner membrane. It carries out the reaction [GlcNAc-(1-&gt;4)-Mur2Ac(oyl-L-Ala-gamma-D-Glu-L-Lys-D-Ala-D-Ala)](n)-di-trans,octa-cis-undecaprenyl diphosphate + beta-D-GlcNAc-(1-&gt;4)-Mur2Ac(oyl-L-Ala-gamma-D-Glu-L-Lys-D-Ala-D-Ala)-di-trans,octa-cis-undecaprenyl diphosphate = [GlcNAc-(1-&gt;4)-Mur2Ac(oyl-L-Ala-gamma-D-Glu-L-Lys-D-Ala-D-Ala)](n+1)-di-trans,octa-cis-undecaprenyl diphosphate + di-trans,octa-cis-undecaprenyl diphosphate + H(+). Its pathway is cell wall biogenesis; peptidoglycan biosynthesis. In terms of biological role, peptidoglycan polymerase that catalyzes glycan chain elongation from lipid-linked precursors. The polypeptide is Biosynthetic peptidoglycan transglycosylase (Agrobacterium fabrum (strain C58 / ATCC 33970) (Agrobacterium tumefaciens (strain C58))).